A 127-amino-acid polypeptide reads, in one-letter code: Ribosome-binding factor A (127 aa).

It belongs to the RbfA family. Monomer. Binds 30S ribosomal subunits, but not 50S ribosomal subunits or 70S ribosomes.

It localises to the cytoplasm. In terms of biological role, one of several proteins that assist in the late maturation steps of the functional core of the 30S ribosomal subunit. Associates with free 30S ribosomal subunits (but not with 30S subunits that are part of 70S ribosomes or polysomes). Required for efficient processing of 16S rRNA. May interact with the 5'-terminal helix region of 16S rRNA. This Aromatoleum aromaticum (strain DSM 19018 / LMG 30748 / EbN1) (Azoarcus sp. (strain EbN1)) protein is Ribosome-binding factor A.